Reading from the N-terminus, the 299-residue chain is tRNA dimethylallyltransferase 2 (299 aa).

Residue 9–16 (GPTGVGKT) coordinates ATP. Substrate is bound at residue 11–16 (TGVGKT). Positions 34–37 (DSRQ) are interaction with substrate tRNA.

The protein belongs to the IPP transferase family. In terms of assembly, monomer. Mg(2+) is required as a cofactor.

The catalysed reaction is adenosine(37) in tRNA + dimethylallyl diphosphate = N(6)-dimethylallyladenosine(37) in tRNA + diphosphate. In terms of biological role, catalyzes the transfer of a dimethylallyl group onto the adenine at position 37 in tRNAs that read codons beginning with uridine, leading to the formation of N6-(dimethylallyl)adenosine (i(6)A). In Parabacteroides distasonis (strain ATCC 8503 / DSM 20701 / CIP 104284 / JCM 5825 / NCTC 11152), this protein is tRNA dimethylallyltransferase 2.